The following is a 213-amino-acid chain: Large ribosomal subunit protein uL1 (213 aa).

This sequence belongs to the universal ribosomal protein uL1 family. Part of the 50S ribosomal subunit.

Its function is as follows. Binds directly to 23S rRNA. Probably involved in E site tRNA release. In terms of biological role, protein L1 is also a translational repressor protein, it controls the translation of its operon by binding to its mRNA. This Methanosarcina mazei (strain ATCC BAA-159 / DSM 3647 / Goe1 / Go1 / JCM 11833 / OCM 88) (Methanosarcina frisia) protein is Large ribosomal subunit protein uL1.